A 102-amino-acid chain; its full sequence is Small ribosomal subunit protein uS10 (102 aa).

The tract at residues 34–58 (LSGPVPLPTKTLEIPARKSPDGEGT) is disordered.

The protein belongs to the universal ribosomal protein uS10 family. Part of the 30S ribosomal subunit.

In terms of biological role, involved in the binding of tRNA to the ribosomes. This Natronomonas pharaonis (strain ATCC 35678 / DSM 2160 / CIP 103997 / JCM 8858 / NBRC 14720 / NCIMB 2260 / Gabara) (Halobacterium pharaonis) protein is Small ribosomal subunit protein uS10.